A 462-amino-acid chain; its full sequence is MSDNITDLEPTAERPNVRKVFVKTYGCQMNVYDSQRMADSLAAEGYVATDTPDDADLVLLNTCHIREKASEKLYSALGRLRKMKDAREANGKELTIGVAGCVAQAEGQEILRRAPNVDLVIGPQTYHRLPNALARVRSGEKVVETEYALEDKFEHLPSPKREETRKRGVSAFLTVQEGCDKFCTFCVVPYTRGSEVSRSVKQIVAEAERLADSGVRELTLLGQNVNAWHGAGDDGREWGLGELLFRLARIPGIARLRYTTSHPRDMDDSLIAAHRDLRQLMPYLHLPVQSGSDRILKAMNRRHKADEYVRLIERIREVRPDLALSGDFIVGFPGETDQDFEDTMRLVRDVNYAQAYSFKYSPRPGTPGADLDDHVEEAVKDERLQRLQALLSEQQYAFQDSMIGREMDVLLEKPGRVAGQMVGRSPWLLPVIIDDSNDRVGDIIHVKITSTGTNSLIAQKLA.

The MTTase N-terminal domain occupies 18 to 138 (RKVFVKTYGC…LPNALARVRS (121 aa)). Residues cysteine 27, cysteine 63, cysteine 101, cysteine 179, cysteine 183, and cysteine 186 each contribute to the [4Fe-4S] cluster site. Residues 165–397 (RKRGVSAFLT…QALLSEQQYA (233 aa)) enclose the Radical SAM core domain. The TRAM domain occupies 400–462 (DSMIGREMDV…TNSLIAQKLA (63 aa)).

It belongs to the methylthiotransferase family. MiaB subfamily. Monomer. [4Fe-4S] cluster serves as cofactor.

The protein resides in the cytoplasm. The catalysed reaction is N(6)-dimethylallyladenosine(37) in tRNA + (sulfur carrier)-SH + AH2 + 2 S-adenosyl-L-methionine = 2-methylsulfanyl-N(6)-dimethylallyladenosine(37) in tRNA + (sulfur carrier)-H + 5'-deoxyadenosine + L-methionine + A + S-adenosyl-L-homocysteine + 2 H(+). In terms of biological role, catalyzes the methylthiolation of N6-(dimethylallyl)adenosine (i(6)A), leading to the formation of 2-methylthio-N6-(dimethylallyl)adenosine (ms(2)i(6)A) at position 37 in tRNAs that read codons beginning with uridine. The sequence is that of tRNA-2-methylthio-N(6)-dimethylallyladenosine synthase from Brucella anthropi (strain ATCC 49188 / DSM 6882 / CCUG 24695 / JCM 21032 / LMG 3331 / NBRC 15819 / NCTC 12168 / Alc 37) (Ochrobactrum anthropi).